Consider the following 502-residue polypeptide: Lysine--tRNA ligase (502 aa).

The Mg(2+) site is built by Glu398 and Glu405.

This sequence belongs to the class-II aminoacyl-tRNA synthetase family. In terms of assembly, homodimer. It depends on Mg(2+) as a cofactor.

It is found in the cytoplasm. It carries out the reaction tRNA(Lys) + L-lysine + ATP = L-lysyl-tRNA(Lys) + AMP + diphosphate. This chain is Lysine--tRNA ligase (lysS), found in Thermotoga maritima (strain ATCC 43589 / DSM 3109 / JCM 10099 / NBRC 100826 / MSB8).